The chain runs to 231 residues: Ribose-5-phosphate isomerase A (231 aa).

Substrate contacts are provided by residues 28 to 31, 83 to 86, and 96 to 99; these read TGST, DGAD, and KGGG. The active-site Proton acceptor is Glu-105. Lys-123 is a binding site for substrate.

The protein belongs to the ribose 5-phosphate isomerase family. As to quaternary structure, homodimer.

The catalysed reaction is aldehydo-D-ribose 5-phosphate = D-ribulose 5-phosphate. Its pathway is carbohydrate degradation; pentose phosphate pathway; D-ribose 5-phosphate from D-ribulose 5-phosphate (non-oxidative stage): step 1/1. Catalyzes the reversible conversion of ribose-5-phosphate to ribulose 5-phosphate. The polypeptide is Ribose-5-phosphate isomerase A (Sinorhizobium fredii (strain NBRC 101917 / NGR234)).